The chain runs to 250 residues: Histone H1.2 (250 aa).

The segment covering 1-11 (MSDSAVATSAS) has biased composition (polar residues). Disordered regions lie at residues 1 to 53 (MSDS…QMVD) and 101 to 250 (KLIQ…ATKK). Residues 27 to 42 (KKAAATPKSKKSTAAP) show a composition bias toward low complexity. The H15 domain maps to 44 to 118 (SHPPTQQMVD…GASGSFKLSR (75 aa)). The span at 120–133 (AKKDPKPKASAVEK) shows a compositional bias: basic and acidic residues. Positions 151-161 (STSTTKKAAGA) are enriched in low complexity. The segment covering 174-191 (KSVEKKRADKAKAKDAKK) has biased composition (basic and acidic residues). Residues 192–211 (TGTIKAKPTTAKAKSSATKP) are compositionally biased toward low complexity. Composition is skewed to basic residues over residues 212-225 (KTPKPKTKSAKPKK) and 235-250 (TAVKKPKAKTASATKK).

Belongs to the histone H1/H5 family.

The protein resides in the nucleus. The protein localises to the chromosome. Histones H1 are necessary for the condensation of nucleosome chains into higher-order structures. This is Histone H1.2 (His1.2) from Drosophila virilis (Fruit fly).